A 360-amino-acid polypeptide reads, in one-letter code: 3-dehydroquinate synthase (360 aa).

NAD(+) is bound by residues 106 to 110 (GVIGD), 130 to 131 (TS), Lys143, and Lys152. Zn(2+) is bound by residues Glu185, His246, and His262.

This sequence belongs to the sugar phosphate cyclases superfamily. Dehydroquinate synthase family. The cofactor is Co(2+). Requires Zn(2+) as cofactor. NAD(+) serves as cofactor.

Its subcellular location is the cytoplasm. The catalysed reaction is 7-phospho-2-dehydro-3-deoxy-D-arabino-heptonate = 3-dehydroquinate + phosphate. The protein operates within metabolic intermediate biosynthesis; chorismate biosynthesis; chorismate from D-erythrose 4-phosphate and phosphoenolpyruvate: step 2/7. Catalyzes the conversion of 3-deoxy-D-arabino-heptulosonate 7-phosphate (DAHP) to dehydroquinate (DHQ). This is 3-dehydroquinate synthase from Leuconostoc citreum (strain KM20).